The chain runs to 1048 residues: Malignant fibrous histiocytoma-amplified sequence 1 homolog (1048 aa).

Ala2 bears the N-acetylalanine mark. LRR repeat units lie at residues 60–81 (DIEV…LGSA), 84–105 (SLRV…VAEL), 108–129 (HLTE…VVSA), 132–153 (ELRK…LGAL), 155–176 (HLEE…FSCL), 178–199 (HLRT…LLQL), 201–222 (ALEE…ISAL), 224–246 (ALKI…CELA), 247–268 (SLES…FSRL), 270–292 (RLKM…LPLA), 293–314 (GLEE…IAGL), 316–337 (RLLT…IVEL), and 339–360 (GLEE…FGQL). A required for interaction with PJA2 region spans residues 60-360 (DIEVLNLGNN…AVLPDNFGQL (301 aa)). The segment at 60 to 645 (DIEVLNLGNN…DKLLSVAEHR (586 aa)) is required for interaction with PPP2R2A. The region spanning 399–645 (QPAVQPRLKL…DKLLSVAEHR (247 aa)) is the Roc domain. The residue at position 597 (Lys597) is an N6-acetyllysine.

In terms of assembly, interacts with RAF1. Interacts with HSPD1. Interacts with PPP2CA; retains PPP2CA into the cytoplasm and excludes it from the nucleus. Interacts with PPP2R2A; the interaction is direct. Interacts with PJA2. Ubiquitinated. Ubiquitination by PJA2 does not lead MFHAS1 to proteasomal degradation but positively regulates its function in polarization of macrophages.

The protein localises to the cytoplasm. Functionally, probable GTP-binding protein. Functions in innate immunity and more specifically the inflammatory response as a regulator of the Toll-like receptor TLR2 and TLR4 signaling pathways. Negatively regulates the part of the TLR4 signaling pathway that leads to the activation of the transcription factor AP-1. By retaining the phosphatase complex PP2A into the cytoplasm, prevents the dephosphorylation of the AP-1 subunit JUN which is required for proper activation of the transcription factor. Both inhibits and activates the TLR2-dependent signaling pathway. Positively regulates the TLR2 signaling pathway to activate specifically the downstream p38 and JNK MAP kinases and promote the polarization of macrophages toward the pro-inflammatory M1 phenotype. It may also play a role in the regulation of inflammation induced by high glucose through the PKB/AKT signaling pathway. Also involved in erythrocyte differentiation through activation of the ERK1/ERK2 signaling pathway. The chain is Malignant fibrous histiocytoma-amplified sequence 1 homolog from Mus musculus (Mouse).